The primary structure comprises 633 residues: Glutamyl-tRNA(Gln) amidotransferase subunit E (633 aa).

This sequence belongs to the GatB/GatE family. GatE subfamily. Heterodimer of GatD and GatE.

It carries out the reaction L-glutamyl-tRNA(Gln) + L-glutamine + ATP + H2O = L-glutaminyl-tRNA(Gln) + L-glutamate + ADP + phosphate + H(+). Its function is as follows. Allows the formation of correctly charged Gln-tRNA(Gln) through the transamidation of misacylated Glu-tRNA(Gln) in organisms which lack glutaminyl-tRNA synthetase. The reaction takes place in the presence of glutamine and ATP through an activated gamma-phospho-Glu-tRNA(Gln). The GatDE system is specific for glutamate and does not act on aspartate. This Methanococcus vannielii (strain ATCC 35089 / DSM 1224 / JCM 13029 / OCM 148 / SB) protein is Glutamyl-tRNA(Gln) amidotransferase subunit E.